We begin with the raw amino-acid sequence, 827 residues long: Ribosome biogenesis protein ERB1 (827 aa).

The disordered stretch occupies residues 1 to 129 (MVHSKKDKSV…DFSDDNDTRP (129 aa)). A compositionally biased stretch (basic and acidic residues) spans 7–18 (DKSVMKHSDIKK). Residues 45–60 (CDSDDDEEFQSAEEEV) show a composition bias toward acidic residues. Residues 61–77 (LSSGSESSSKEGSTPGS) are compositionally biased toward low complexity. Acidic residues-rich tracts occupy residues 81–99 (GSDE…DEDA) and 108–124 (EEGD…FSDD). The tract at residues 291–409 (RFVPSKHEAK…LRKVPGYGES (119 aa)) is required for interaction with NOP7. The segment at 409-445 (SVRERFERSLDLYLAPRVRKNKLNIDPESLIPELPSP) is required for interaction with YTM1. 6 WD repeats span residues 461–500 (GHKG…EVYK), 509–549 (NQDD…FEVE), 657–695 (KSKG…LVKK), 698–737 (PGAR…TPYK), 741–780 (YHEK…DMMK), and 796–827 (VNSL…LWTT).

This sequence belongs to the WD repeat BOP1/ERB1 family. As to quaternary structure, component of the NOP7 complex, composed of ERB1, NOP7 and YTM1. The complex is held together by ERB1, which interacts with NOP7 via its N-terminal domain and with YTM1 via a high-affinity interaction between the seven-bladed beta-propeller domains of the 2 proteins. The NOP7 complex associates with the 66S pre-ribosome.

It localises to the nucleus. Its subcellular location is the nucleolus. The protein localises to the nucleoplasm. Functionally, component of the NOP7 complex, which is required for maturation of the 25S and 5.8S ribosomal RNAs and formation of the 60S ribosome. The polypeptide is Ribosome biogenesis protein ERB1 (Eremothecium gossypii (strain ATCC 10895 / CBS 109.51 / FGSC 9923 / NRRL Y-1056) (Yeast)).